Here is a 322-residue protein sequence, read N- to C-terminus: Transcription factor Atoh8 (322 aa).

Disordered stretches follow at residues 77–96 (PVPASVAPAVPPGGGTDTAR), 101–144 (IRAP…EAHS), and 159–221 (PPAR…ATAA). Over residues 101–111 (IRAPEVSDARK) the composition is skewed to basic and acidic residues. The segment at 231 to 244 (TRRLLANARERTRV) is basic motif; degenerate. The region spanning 231–283 (TRRLLANARERTRVHTISAAFEALRKQVPCYSYGQKLSKLAILRIACNYILSL) is the bHLH domain. The interval 245-283 (HTISAAFEALRKQVPCYSYGQKLSKLAILRIACNYILSL) is helix-loop-helix motif.

Efficient DNA binding requires dimerization with another bHLH protein. Interacts with NEUROG3 and NEUROD1. Interacts with ZFPM2; mediates indirect interaction with GATA4. Forms a heterodimer with TCF3; repress transcription of TCF3 and TCF3/NEUROG3 dimer-induced transactivation of E box-dependent promoters. In terms of tissue distribution, expressed by subsets of mature neurons. Expressed in kidney (podocytes). Expression is restricted to the atria, lung mesenchyme, and vascular smooth muscle.

Its subcellular location is the nucleus. The protein resides in the nucleus speckle. It is found in the cytoplasm. Transcription factor that binds a palindromic (canonical) core consensus DNA sequence 5'-CANNTG- 3' known as an E-box element, possibly as a heterodimer with other bHLH proteins. Regulates endothelial cell proliferation, migration and tube-like structures formation. Modulates endothelial cell differentiation through NOS3. May be implicated in specification and differentiation of neuronal cell lineages in the brain. May participate in kidney development and may be involved in podocyte differentiation. During early embryonic development is involved in tissue-specific differentiation processes that are dependent on class II bHLH factors and namely modulates the differentiation program initiated by the pro-endocrine factor NEUROG3. During myogenesis, may play a role during the transition of myoblasts from the proliferative phase to the differentiation phase. Positively regulates HAMP transcription in two ways, firstly by acting directly on the HAMP promoter via E-boxes binding and indirectly through increased phosphorylation of SMAD protein complex. Repress NEUROG3-dependent gene activation in a gene-specific manner through at least two mechanisms; requires only either the sequestering of a general partner such as TCF3 through heterodimerization, either also requires binding of the bHLH domain to DNA via a basic motif. This is Transcription factor Atoh8 from Mus musculus (Mouse).